The sequence spans 221 residues: ATP phosphoribosyltransferase (221 aa).

The protein belongs to the ATP phosphoribosyltransferase family. Short subfamily. Heteromultimer composed of HisG and HisZ subunits.

The protein resides in the cytoplasm. It catalyses the reaction 1-(5-phospho-beta-D-ribosyl)-ATP + diphosphate = 5-phospho-alpha-D-ribose 1-diphosphate + ATP. The protein operates within amino-acid biosynthesis; L-histidine biosynthesis; L-histidine from 5-phospho-alpha-D-ribose 1-diphosphate: step 1/9. Catalyzes the condensation of ATP and 5-phosphoribose 1-diphosphate to form N'-(5'-phosphoribosyl)-ATP (PR-ATP). Has a crucial role in the pathway because the rate of histidine biosynthesis seems to be controlled primarily by regulation of HisG enzymatic activity. This is ATP phosphoribosyltransferase from Anaeromyxobacter dehalogenans (strain 2CP-C).